Consider the following 149-residue polypeptide: Transcriptional repressor NrdR (149 aa).

Residues 3–34 (CPYCSYEESKVVDSRSAEDYNAIRRRRECLRC) fold into a zinc finger. The 91-residue stretch at 49 to 139 (ILVIKKDLSR…VYRQFKDINT (91 aa)) folds into the ATP-cone domain.

Belongs to the NrdR family. The cofactor is Zn(2+).

Functionally, negatively regulates transcription of bacterial ribonucleotide reductase nrd genes and operons by binding to NrdR-boxes. The sequence is that of Transcriptional repressor NrdR from Clostridium perfringens (strain SM101 / Type A).